The chain runs to 140 residues: FAD synthase (140 aa).

ATP contacts are provided by residues 9-10 (TF), 14-17 (HPGH), and D92.

Belongs to the archaeal FAD synthase family. In terms of assembly, homodimer. A divalent metal cation is required as a cofactor.

The catalysed reaction is FMN + ATP + H(+) = FAD + diphosphate. It functions in the pathway cofactor biosynthesis; FAD biosynthesis; FAD from FMN: step 1/1. Its function is as follows. Catalyzes the transfer of the AMP portion of ATP to flavin mononucleotide (FMN) to produce flavin adenine dinucleotide (FAD) coenzyme. This chain is FAD synthase, found in Natronomonas pharaonis (strain ATCC 35678 / DSM 2160 / CIP 103997 / JCM 8858 / NBRC 14720 / NCIMB 2260 / Gabara) (Halobacterium pharaonis).